The chain runs to 189 residues: Putative lipoprotein LppK (189 aa).

The first 22 residues, 1–22, serve as a signal peptide directing secretion; that stretch reads MRRNIRVTLGAATIVAALGLSG. A lipid anchor (N-palmitoyl cysteine) is attached at Cys-23. Cys-23 is lipidated: S-diacylglycerol cysteine. Disordered regions lie at residues 26-49 and 166-189; these read PEFKRSSPPAPSLPPVTSSPLEAA and MGNSPDSTPSATSPAPAPSPTPPG. The span at 169 to 179 shows a compositional bias: low complexity; that stretch reads SPDSTPSATSP. The span at 180–189 shows a compositional bias: pro residues; it reads APAPSPTPPG.

The protein belongs to the MTB12 family.

The protein localises to the cell membrane. This is Putative lipoprotein LppK (lppK) from Mycobacterium tuberculosis (strain CDC 1551 / Oshkosh).